A 162-amino-acid polypeptide reads, in one-letter code: Putative 4-hydroxy-4-methyl-2-oxoglutarate aldolase (162 aa).

Substrate-binding positions include 75 to 78 (GDML) and R97. D98 contributes to the a divalent metal cation binding site.

This sequence belongs to the class II aldolase/RraA-like family. In terms of assembly, homotrimer. It depends on a divalent metal cation as a cofactor.

The enzyme catalyses 4-hydroxy-4-methyl-2-oxoglutarate = 2 pyruvate. It carries out the reaction oxaloacetate + H(+) = pyruvate + CO2. Catalyzes the aldol cleavage of 4-hydroxy-4-methyl-2-oxoglutarate (HMG) into 2 molecules of pyruvate. Also contains a secondary oxaloacetate (OAA) decarboxylase activity due to the common pyruvate enolate transition state formed following C-C bond cleavage in the retro-aldol and decarboxylation reactions. The polypeptide is Putative 4-hydroxy-4-methyl-2-oxoglutarate aldolase (Pseudomonas paraeruginosa (strain DSM 24068 / PA7) (Pseudomonas aeruginosa (strain PA7))).